We begin with the raw amino-acid sequence, 248 residues long: Large ribosomal subunit protein uL30 (248 aa).

M1 is modified (N-acetylmethionine). 4 repeat units span residues 7–18 (KKKKVPAVPETL), 19–30 (KKKRKNFAELKI), 31–42 (KRLRKKFAQKML), and 43–54 (RKARRKLIYEKA). Positions 7-54 (KKKKVPAVPETLKKKRKNFAELKIKRLRKKFAQKMLRKARRKLIYEKA) are 4 X 12 AA tandem repeats. Position 17 is a phosphothreonine (T17). K124 carries the post-translational modification N6-acetyllysine. Position 127 is an N6-succinyllysine (K127). A Phosphotyrosine modification is found at Y139.

The protein belongs to the universal ribosomal protein uL30 family. As to quaternary structure, component of the large ribosomal subunit. Homodimer. Interacts with DHX33.

The protein resides in the cytoplasm. Functionally, component of the large ribosomal subunit. The ribosome is a large ribonucleoprotein complex responsible for the synthesis of proteins in the cell. Binds to G-rich structures in 28S rRNA and in mRNAs. Plays a regulatory role in the translation apparatus; inhibits cell-free translation of mRNAs. The polypeptide is Large ribosomal subunit protein uL30 (RPL7) (Bos taurus (Bovine)).